The primary structure comprises 215 residues: Vacuolar ATPase assembly integral membrane protein VPH2 (215 aa).

Residues Met1 to Gln134 lie on the Cytoplasmic side of the membrane. A helical membrane pass occupies residues Val135–Trp155. Over Thr156 to Arg167 the chain is Lumenal. Residues Leu168–Tyr186 traverse the membrane as a helical segment. Over Asn187–Leu215 the chain is Cytoplasmic.

Its subcellular location is the endoplasmic reticulum membrane. In terms of biological role, required for vacuolar ATPase assembly. The sequence is that of Vacuolar ATPase assembly integral membrane protein VPH2 (VPH2) from Saccharomyces cerevisiae (strain ATCC 204508 / S288c) (Baker's yeast).